The chain runs to 183 residues: Intraflagellar transport protein 27 homolog (183 aa).

GTP-binding positions include Gly12–Thr19, Asp63–Gln67, and Asn120–Asp123.

It belongs to the small GTPase superfamily. Rab family. As to quaternary structure, component of the IFT complex B.

It is found in the cell projection. Its subcellular location is the cilium. It localises to the flagellum. Functionally, small GTPase-like component of the intraflagellar transport (IFT) complex B required for both anterograde and retrograde intraflagellar transport. May be involved in cargo loading of the retrograde transport. The polypeptide is Intraflagellar transport protein 27 homolog (Trypanosoma brucei brucei (strain 927/4 GUTat10.1)).